We begin with the raw amino-acid sequence, 326 residues long: Peroxidase 3 (326 aa).

The first 24 residues, 1 to 24 (MNCLIAIALSVSFFLVGIVGPIQA), serve as a signal peptide directing secretion. 4 disulfides stabilise this stretch: Cys-35–Cys-113, Cys-68–Cys-73, Cys-119–Cys-321, and Cys-198–Cys-231. The active-site Proton acceptor is His-66. Residues Asp-67, Val-70, Gly-72, Asp-74, and Ser-76 each coordinate Ca(2+). Asn-80 and Asn-138 each carry an N-linked (GlcNAc...) asparagine glycan. Pro-161 serves as a coordination point for substrate. The N-linked (GlcNAc...) asparagine glycan is linked to Asn-166. His-191 contributes to the heme b binding site. Position 192 (Thr-192) interacts with Ca(2+). Asn-207 and Asn-237 each carry an N-linked (GlcNAc...) asparagine glycan. Ca(2+)-binding residues include Asp-244, Ser-247, and Asp-252.

This sequence belongs to the peroxidase family. Classical plant (class III) peroxidase subfamily. Heme b is required as a cofactor. Ca(2+) serves as cofactor. In terms of tissue distribution, expressed in root cells.

The protein resides in the secreted. It catalyses the reaction 2 a phenolic donor + H2O2 = 2 a phenolic radical donor + 2 H2O. Removal of H(2)O(2), oxidation of toxic reductants, biosynthesis and degradation of lignin, suberization, auxin catabolism, response to environmental stresses such as wounding, pathogen attack and oxidative stress. These functions might be dependent on each isozyme/isoform in each plant tissue. This is Peroxidase 3 (PER3) from Arabidopsis thaliana (Mouse-ear cress).